The following is a 2214-amino-acid chain: MGAQVSSQKVGAHENTNVATGGSTVNYTTINYYKDSASNAASKLDFSQDPSKFTEPVKDIMLKSAPALNSPNVEACGYSDRVRQITLGNSTITTQEAANAVVAYGEWPSYLDDREANPIDAPTEPDVSSNRFYTLDSVQWTSTSRGWWWKLPDALKDMGMFGQNMYYHYLGRSGYTVHVQCNASKFHQGALGVFAIPEYVMACNTEAKTSYVSYINANPGEKGGVFSSTYNPSEEASEGRKFAALDYLLGCGVLAGNAFVYPHQIINLRTNNSATLVLPYVNSLAIDCMAKHNNWGLVILPLCKLDYAPNSSTEIPITVTIAPMFTEFNGLRNITVPATQGLPTMLTPGSSQFLTSDDFQSPCALPNFDVTPPIHIPGEVFNMMELAEIDSMIPMNSVTGKANTMEMYPIPLDDKGGKTPIFSISLSPASDKRLQYTMLGEILNYYTHWTGSLRFTFLFCGSMMATGKILLSYSPPGAKPPTTRKDAMLGTHIIWDLGLQSSCTMLAPWISNTVYRRCIKDDFTEGGYITCFYQTRIVVPSGTPTSMFMLAFVSACPDFSVRLLRDTNHISQRTLFARAQGIEETIDTVISNALQLSQPKPQKQLTAQSTPSTSGVNSQEVPALTAVETGVSGQAIPSDVIETRHVVNYKTRSESTLESFFGRSACVTMLEVENFNATTEADKKKQFTTWAITYTDTVQLRRKLEFFTYSRFDLEMTFVITERYYTSNTGYARNQVYQLMYIPPGAPRPTAWDDYTWQSSSNPSVFYTYGSAPPRISIPYVGIANAYSHFYDGFARVPLKDETVDSGDTYYGLVTINDFGTLAVRVVNEFNPARIISKIRVYMKPKHVRCWCPRPPRAVPYRGEGVDFKQDSITPLIAVENINTFGGFGHQNMAVYVAGYKICNYHLATPEDHDNAVRVLWNRDLMIVSSRAQGSDTIARCNCRTGVYYCKSMKKYYPVTVTEPTFQYMEANDYYPARYQTHMLLGMGFAEPGDCGGILRCNHGVMGIVTAGGNGIVAFADIRDLWVYEEEAMEQGITSYIESLGAAFGSGFTNQIGEKVSELTSMVTSSITEKLLKTLIKIISTLVIISRNYEDTTTVLATLALLGCDYSPWQWIKKKACDVLELPYVMRQGDSWLKKFTEACNAAKGLEWISNKISKFIDWLKERIIPEAKDKVEFITKLKQLGILENQINTIHQSCPSQEQQEILFNNVRWLAIQSRRFAPLYAVEAKRISKLENTINNYIQFKSKHRIEPVCMLIHGSPGTGKSIATSLIGRAIAEKENTSTYSLPPDPTHFDGYKQQGVVIMDDLNQNPDGNDMKLFCQMVSTVEFIPPMASLEEKGILFTSDYVLASTNSHTITPPTVSHSDALNRRFAFDMEVYTMSEHSIKGKLNMATATQLCKDCPQPANFKKCCPLVCGKALQLMDKNTRQRFTLDEITTLVINERNRRANIGNCMEALFQGPIQYRDVMIDIKETPAPDYINDLLQSVDSQELRDYCEKKGWIARLNNDLVMERNLNRAMTILQAVTTFAAVAAVVYVMYKLFAGHQGAYTGLPNKKPSVPTVRTAKVQGPGFDYAVAMAKRNILTATTSKGEFTMLGVHDNVAILPTHAAPGDSIVIDGKEVEVLDAEALEDQSGTNLEITIVKLKRNEKFRDIRPHIPTQITETNDGVLIVNTSKYPNMYVPVGAVTEQGYLNLGGRQTARTLMYNFPTRAGQCGGVITCTGKVIGMHVGGNGSHGFAAALKRSYFTQSQGEIQWMRPSKEVGYPVINAPSKTKLEPSVFHHVFEGAKEPAVLTKNDPRLKTDFEEAIFSKYVGNKITEVDEYMKEAVDHYAGQLMSLDINTEQMCLEDAMYGTDGLEALDLSTSAGYPYVAMGKKKRDILNKQTRDTKEMQRLLDTYGINLPLVTYVKDELRSKTKVEQGKSRLIEASSLNDSVAMRMAFGNLYAAFHKNPGVVTGSAVGCDPDLFWSKIPVLMEEKLFAFDYTGYDASLSPAWFEALKMVLEKIGFGDRVDYIDYLNHSHHLYKNKTYCVKGGMPSGCSGTSIFNSMINNLIIRTLLLKTYKGIDLDHLKMIAYGDDVIASYPHEVDASLLAQSGKDYGLTMTPADKSATFETVTWENVTFLKRFFRADEKYPFLVHPVMPMKEIHESIRWTKDPRNTQDHVRSLCLLAWHNGEEEYNKFLAKVRSVPIGRALLLPEYSTLYRRWLDSF.

2 disordered regions span residues 1-21 (MGAQVSSQKVGAHENTNVATG) and 600-619 (KPQKQLTAQSTPSTSGVNSQ). The N-myristoyl glycine; by host moiety is linked to residue Gly2. The Cytoplasmic portion of the chain corresponds to 2–1525 (GAQVSSQKVG…NLNRAMTILQ (1524 aa)). Amphipathic alpha-helix regions lie at residues 580–601 (QGIEETIDTVISNALQLSQPKP) and 581–601 (GIEETIDTVISNALQLSQPKP). The segment covering 606–619 (TAQSTPSTSGVNSQ) has biased composition (polar residues). Active-site for protease 2A activity residues include His906 and Asp924. Residues Cys941 and Cys943 each coordinate Zn(2+). Cys995 acts as the For protease 2A activity in catalysis. Residues Cys1001 and His1003 each contribute to the Zn(2+) site. Residues 1133-1205 (GDSWLKKFTE…HQSCPSQEQQ (73 aa)) are membrane-binding. The oligomerization stretch occupies residues 1133–1271 (GDSWLKKFTE…SPGTGKSIAT (139 aa)). Residues 1154-1158 (SNKIS) are RNA-binding. An SF3 helicase domain is found at 1237 to 1393 (ENTINNYIQF…SEHSIKGKLN (157 aa)). Position 1261 to 1268 (1261 to 1268 (GSPGTGKS)) interacts with ATP. Zn(2+)-binding residues include Cys1401, Cys1404, Cys1413, and Cys1418. Residues 1401–1418 (CKDCPQPANFKKCCPLVC) form a C4-type zinc finger. The tract at residues 1445–1452 (ERNRRANI) is RNA-binding. An oligomerization region spans residues 1456 to 1461 (MEALFQ). Residues 1526–1541 (AVTTFAAVAAVVYVMY) lie within the membrane without spanning it. Residues 1542–2214 (KLFAGHQGAY…TLYRRWLDSF (673 aa)) are Cytoplasmic-facing. An O-(5'-phospho-RNA)-tyrosine modification is found at Tyr1551. Residues 1571-1749 (GPGFDYAVAM…FAAALKRSYF (179 aa)) form the Peptidase C3 domain. Catalysis depends on for protease 3C activity residues His1610, Glu1641, and Cys1717. One can recognise a RdRp catalytic domain in the interval 1980-2095 (EKLFAFDYTG…SYPHEVDASL (116 aa)). Positions 1986 and 2081 each coordinate Mg(2+).

Belongs to the picornaviruses polyprotein family. In terms of assembly, interacts with capsid protein VP1 and capsid protein VP3 to form heterotrimeric protomers. As to quaternary structure, interacts with capsid protein VP0, and capsid protein VP3 to form heterotrimeric protomers. Five protomers subsequently associate to form pentamers which serve as building blocks for the capsid. Interacts with capsid protein VP2, capsid protein VP3 and capsid protein VP4 following cleavage of capsid protein VP0. Interacts with capsid protein VP1 and capsid protein VP3 in the mature capsid. In terms of assembly, interacts with capsid protein VP0 and capsid protein VP1 to form heterotrimeric protomers. Five protomers subsequently associate to form pentamers which serve as building blocks for the capsid. Interacts with capsid protein VP4 in the mature capsid. Interacts with protein 2C; this interaction may be important for virion morphogenesis. As to quaternary structure, interacts with capsid protein VP1 and capsid protein VP3. Homodimer. In terms of assembly, homohexamer; forms a hexameric ring structure with 6-fold symmetry characteristic of AAA+ ATPases. Interacts (via N-terminus) with host RTN3 (via reticulon domain); this interaction is important for viral replication. Interacts with capsid protein VP3; this interaction may be important for virion morphogenesis. As to quaternary structure, interacts with protein 3CD. Homodimer. Interacts with host GBF1. Interacts (via GOLD domain) with host ACBD3 (via GOLD domain); this interaction allows the formation of a viral protein 3A/ACBD3 heterotetramer with a 2:2 stoichiometry, which will stimulate the recruitment of host PI4KB in order to synthesize PI4P at the viral RNA replication sites. In terms of assembly, interacts with RNA-directed RNA polymerase. As to quaternary structure, interacts with protein 3AB and with RNA-directed RNA polymerase. Interacts with Viral protein genome-linked and with protein 3CD. Mg(2+) is required as a cofactor. Post-translationally, specific enzymatic cleavages in vivo by the viral proteases yield processing intermediates and the mature proteins. Myristoylation is required for the formation of pentamers during virus assembly. Further assembly of 12 pentamers and a molecule of genomic RNA generates the provirion. In terms of processing, during virion maturation, immature virions are rendered infectious following cleavage of VP0 into VP4 and VP2. This maturation seems to be an autocatalytic event triggered by the presence of RNA in the capsid and it is followed by a conformational change infectious virion. Post-translationally, myristoylation is required during RNA encapsidation and formation of the mature virus particle. VPg is uridylylated by the polymerase into VPg-pUpU. This acts as a nucleotide-peptide primer for the genomic RNA replication.

It localises to the virion. Its subcellular location is the host cytoplasm. The protein resides in the host cytoplasmic vesicle membrane. It is found in the host nucleus. The enzyme catalyses a ribonucleoside 5'-triphosphate + H2O = a ribonucleoside 5'-diphosphate + phosphate + H(+). It catalyses the reaction Selective cleavage of Tyr-|-Gly bond in the picornavirus polyprotein.. It carries out the reaction RNA(n) + a ribonucleoside 5'-triphosphate = RNA(n+1) + diphosphate. The catalysed reaction is Selective cleavage of Gln-|-Gly bond in the poliovirus polyprotein. In other picornavirus reactions Glu may be substituted for Gln, and Ser or Thr for Gly.. Its activity is regulated as follows. Replication or transcription is subject to high level of random mutations by the nucleotide analog ribavirin. Its function is as follows. Forms an icosahedral capsid of pseudo T=3 symmetry with capsid proteins VP2 and VP3. The capsid is 300 Angstroms in diameter, composed of 60 copies of each capsid protein and enclosing the viral positive strand RNA genome. Capsid protein VP1 mainly forms the vertices of the capsid. Capsid protein VP1 interacts with host cell receptor to provide virion attachment to target host cells. This attachment induces virion internalization. Tyrosine kinases are probably involved in the entry process. After binding to its receptor, the capsid undergoes conformational changes. Capsid protein VP1 N-terminus (that contains an amphipathic alpha-helix) and capsid protein VP4 are externalized. Together, they shape a pore in the host membrane through which viral genome is translocated to host cell cytoplasm. Forms an icosahedral capsid of pseudo T=3 symmetry with capsid proteins VP2 and VP3. The capsid is 300 Angstroms in diameter, composed of 60 copies of each capsid protein and enclosing the viral positive strand RNA genome. In terms of biological role, lies on the inner surface of the capsid shell. After binding to the host receptor, the capsid undergoes conformational changes. Capsid protein VP4 is released, Capsid protein VP1 N-terminus is externalized, and together, they shape a pore in the host membrane through which the viral genome is translocated into the host cell cytoplasm. Functionally, component of immature procapsids, which is cleaved into capsid proteins VP4 and VP2 after maturation. Allows the capsid to remain inactive before the maturation step. Its function is as follows. Cysteine protease that cleaves viral polyprotein and specific host proteins. It is responsible for the autocatalytic cleavage between the P1 and P2 regions, which is the first cleavage occurring in the polyprotein. Also cleaves the host translation initiation factor EIF4G1, in order to shut down the capped cellular mRNA translation. Inhibits the host nucleus-cytoplasm protein and RNA trafficking by cleaving host members of the nuclear pores. Counteracts stress granule formation probably by antagonizing its assembly or promoting its dissassembly. Cleaves and inhibits host IFIH1/MDA5, thereby inhibiting the type-I IFN production and the establishment of the antiviral state. Cleaves and inhibits host MAVS, thereby inhibiting the type-I IFN production and the establishment of the antiviral state. Plays an essential role in the virus replication cycle by acting as a viroporin. Creates a pore in the host endoplasmic reticulum and as a consequence releases Ca2+ in the cytoplasm of infected cell. In turn, high levels of cytoplasmic calcium may trigger membrane trafficking and transport of viral ER-associated proteins to viroplasms, sites of viral genome replication. In terms of biological role, induces and associates with structural rearrangements of intracellular membranes. Displays RNA-binding, nucleotide binding and NTPase activities. May play a role in virion morphogenesis and viral RNA encapsidation by interacting with the capsid protein VP3. Functionally, localizes the viral replication complex to the surface of membranous vesicles. Together with protein 3CD binds the Cis-Active RNA Element (CRE) which is involved in RNA synthesis initiation. Acts as a cofactor to stimulate the activity of 3D polymerase, maybe through a nucleid acid chaperone activity. Its function is as follows. Localizes the viral replication complex to the surface of membranous vesicles. It inhibits host cell endoplasmic reticulum-to-Golgi apparatus transport and causes the disassembly of the Golgi complex, possibly through GBF1 interaction. This would result in depletion of MHC, trail receptors and IFN receptors at the host cell surface. Plays an essential role in viral RNA replication by recruiting ACBD3 and PI4KB at the viral replication sites, thereby allowing the formation of the rearranged membranous structures where viral replication takes place. Acts as a primer for viral RNA replication and remains covalently bound to viral genomic RNA. VPg is uridylylated prior to priming replication into VPg-pUpU. The oriI viral genomic sequence may act as a template for this. The VPg-pUpU is then used as primer on the genomic RNA poly(A) by the RNA-dependent RNA polymerase to replicate the viral genome. During genome replication, the VPg-RNA linkage is removed by the host TDP2, thereby accelerating replication. During the late stage of the replication cycle, host TDP2 is excluded from sites of viral RNA synthesis and encapsidation, allowing for the generation of progeny virions. In terms of biological role, involved in the viral replication complex and viral polypeptide maturation. It exhibits protease activity with a specificity and catalytic efficiency that is different from protease 3C. Protein 3CD lacks polymerase activity. Protein 3CD binds to the 5'UTR of the viral genome. Functionally, replicates the viral genomic RNA on the surface of intracellular membranes. May form linear arrays of subunits that propagate along a strong head-to-tail interaction called interface-I. Covalently attaches UMP to a tyrosine of VPg, which is used to prime RNA synthesis. The positive stranded RNA genome is first replicated at virus induced membranous vesicles, creating a dsRNA genomic replication form. This dsRNA is then used as template to synthesize positive stranded RNA genomes. ss(+)RNA genomes are either translated, replicated or encapsidated. Its function is as follows. Major viral protease that mediates proteolytic processing of the polyprotein. Cleaves host EIF5B, contributing to host translation shutoff. Also cleaves host PABPC1, contributing to host translation shutoff. Cleaves host NLRP1, triggers host N-glycine-mediated degradation of the autoinhibitory NLRP1 N-terminal fragment. In Coxsackievirus A24 (strain EH24/70), this protein is Genome polyprotein.